We begin with the raw amino-acid sequence, 1723 residues long: MRKLLLLIAASLLGVGLYAQNAKIKLDAPTTRTTCTNNSFKQFDASFSFNEVELTKVETKGGTFASVSIPGAFPTGEVGSPEVPAVRKLIAVPVGATPVVRVKSFTEQVYSLNQYGSEKLMPHQPSMSKSDDPEKVPFAYNAAAYARKGFVGQELTQVEMLGTMRGVRIAALTINPVQYDVVANQLKVRNNIEIEVSFQGADEVATQRLYDASFSPYFETAYKQLFNRDVYTDHGDLYNTPVRMLVVAGAKFKEALKPWLTWKAQKGFYLDVHYTDEAEVGTTNASIKAFIHKKYNDGLAASAAPVFLALVGDTDVISGEKGKKTKKVTDLYYSAVDGDYFPEMYTFRMSASSPEELTNIIDKVLMYEKATMPDKSYLEKALLIAGADSYWNPKIGQQTIKYAVQYYYNQDHGYTDVYSYPKAPYTGCYSHLNTGVGFANYTAHGSETSWADPSVTATQVKALTNKNKYFLAIGNCCVTAQFDYPQPCFGEVMTRVKEKGAYAYIGSSPNSYWGEDYYWSVGANAVFGVQPTFEGTSMGSYDATFLEDSYNTVNSIMWAGNLAATHAENIGNVTHIGAHYYWEAYHVLGDGSVMPYRAMPKTNTYTLPASLPQNQASYSIQASAGSYVAISKDGVLYGTGVANASGVATVNMTKQITENGNYDVVITRSNYLPVIKQIQAGEPSPYQPVSNLTATTQGQKVTLKWDAPSAKKAEGSREVKRIGDGLFVTIEPANDVRANEAKVVLAADNVWGDNTGYQFLLDADHNTFGSVIPATGPLFTGTASSNLYSANFEYLIPANADPVVTTQNIIVTGQGEVVIPGGVYDYCITNPEPASGKMWIAGDGGNQPARYDDFTFEAGKKYTFTMRRAGMGDGTDMEVEDDSPASYTYTVYRDGTKIKEGLTATTFEEDGVAAGNHEYCVEVKYTAGVSPKVCKDVTVEGSNEFAPVQNLTGSAVGQKVTLKWDAPNGTPNPNPNPNPGTTTLSESFENGIPASWKTIDADGDGHGWKPGNAPGIAGYNSNGCVYSESFGLGGIGVLTPDNYLITPALDLPNGGKLTFWVCAQDANYASEHYAVYASSTGNDASNFTNALLEETITAKGVRSPEAIRGRIQGTWRQKTVDLPAGTKYVAFRHFQSTDMFYIDLDEVEIKANGKRADFTETFESSTHGEAPAEWTTIDADGDGQGWLCLSSGQLDWLTAHGGTNVVASFSWNGMALNPDNYLISKDVTGATKVKYYYAVNDGFPGDHYAVMISKTGTNAGDFTVVFEETPNGINKGGARFGLSTEADGAKPQSVWIERTVDLPAGTKYVAFRHYNCSDLNYILLDDIQFTMGGSPTPTDYTYTVYRDGTKIKEGLTETTFEEDGVATGNHEYCVEVKYTAGVSPKKCVNVTINPTQFNPVKNLKAQPDGGDVVLKWEAPSAKKAEGSREVKRIGDGLFVTIEPANDVRANEAKVVLAADNVWGDNTGYQFLLDADHNTFGSVIPATGPLFTGTASSNLYSANFEYLIPANADPVVTTQNIIVTGQGEVVIPGGVYDYCITNPEPASGKMWIAGDGGNQPARYDDFTFEAGKKYTFTMRRAGMGDGTDMEVEDDSPASYTYTVYRDGTKIKEGLTETTYRDAGMSAQSHEYCVEVKYAAGVSPKVCVDYIPDGVADVTAQKPYTLTVVGKTITVTCQGEAMIYDMNGRRLAAGRNTVVYTAQGGYYAVMVVVDGKSYVEKLAVK.

An N-terminal signal peptide occupies residues 1–24; that stretch reads MRKLLLLIAASLLGVGLYAQNAKI. Positions 25–228 are excised as a propeptide; that stretch reads KLDAPTTRTT…ETAYKQLFNR (204 aa). The Ca(2+) site is built by aspartate 313, aspartate 337, aspartate 339, phenylalanine 341, and glutamate 343. Histidine 444 serves as the catalytic Proton donor. Catalysis depends on cysteine 477, which acts as the Nucleophile. 2 residues coordinate Ca(2+): phenylalanine 482 and glutamate 491. Positions 965–985 are disordered; it reads DAPNGTPNPNPNPNPGTTTLS. The Ca(2+) site is built by serine 987, glutamate 989, aspartate 1000, aspartate 1002, aspartate 1004, histidine 1006, serine 1021, glycine 1023, asparagine 1042, aspartate 1145, and glutamate 1146.

This sequence belongs to the peptidase C25 family. Post-translationally, proteolytically cleaved into a catalytic subunit and three adhesins. Arg-gingipain is involved in this post-translational processing.

Its subcellular location is the secreted. The enzyme catalyses Endopeptidase with strict specificity for lysyl bonds.. Functionally, cysteine proteinase with a strong preference for substrates with Lys in the P1 position. Hydrolyzes bovine hemoglobin, bovine serum albumin, casein, human placental type I collagen and human IgA and IgG. Disrupts the functions of polymorphonuclear leukocytes. May act as a virulence factor in the development of peridontal disease. Involved in the coaggregation of P.gingivalis with other oral bacteria. In Porphyromonas gingivalis (Bacteroides gingivalis), this protein is Lys-gingipain HG66.